The following is a 296-amino-acid chain: Glycine N-acyltransferase-like protein (296 aa).

The residue at position 41 (Lys-41) is an N6-acetyllysine; alternate. Lys-41 carries the post-translational modification N6-succinyllysine; alternate. Lys-43 carries the post-translational modification N6-acetyllysine. Residue Lys-48 is modified to N6-acetyllysine; alternate. Residue Lys-48 is modified to N6-succinyllysine; alternate. Residues Lys-80 and Lys-83 each carry the N6-acetyllysine modification. N6-acetyllysine; alternate occurs at positions 183 and 256. Lys-183 and Lys-256 each carry N6-succinyllysine; alternate.

The protein belongs to the glycine N-acyltransferase family.

It is found in the mitochondrion. It catalyses the reaction an acyl-CoA + glycine = an N-acylglycine + CoA + H(+). Functionally, mitochondrial acyltransferase which transfers the acyl group to the N-terminus of glycine. Can conjugate a multitude of substrates to form a variety of N-acylglycines. This chain is Glycine N-acyltransferase-like protein (Gm4952), found in Mus musculus (Mouse).